The following is a 252-amino-acid chain: Geranylgeranylglyceryl phosphate synthase (252 aa).

Residues Asp-25 and Ser-54 each contribute to the Mg(2+) site. Sn-glycerol 1-phosphate is bound by residues 174–180 (FMDAGSG), 205–206 (GG), and 227–228 (GN).

It belongs to the GGGP/HepGP synthase family. Group II subfamily. As to quaternary structure, homohexamer. Mg(2+) serves as cofactor.

It catalyses the reaction sn-glycerol 1-phosphate + (2E,6E,10E)-geranylgeranyl diphosphate = sn-3-O-(geranylgeranyl)glycerol 1-phosphate + diphosphate. Functionally, prenyltransferase that catalyzes the transfer of the geranylgeranyl moiety of geranylgeranyl diphosphate (GGPP) to the C3 hydroxyl of sn-glycerol-1-phosphate (G1P). The chain is Geranylgeranylglyceryl phosphate synthase from Chitinophaga pinensis (strain ATCC 43595 / DSM 2588 / LMG 13176 / NBRC 15968 / NCIMB 11800 / UQM 2034).